Consider the following 284-residue polypeptide: Phosphatidylserine decarboxylase proenzyme (284 aa).

Residues Asp-88, His-145, and Ser-248 each act as charge relay system; for autoendoproteolytic cleavage activity in the active site. Residue Ser-248 is the Schiff-base intermediate with substrate; via pyruvic acid; for decarboxylase activity of the active site. At Ser-248 the chain carries Pyruvic acid (Ser); by autocatalysis.

The protein belongs to the phosphatidylserine decarboxylase family. PSD-B subfamily. Prokaryotic type I sub-subfamily. As to quaternary structure, heterodimer of a large membrane-associated beta subunit and a small pyruvoyl-containing alpha subunit. Pyruvate serves as cofactor. Post-translationally, is synthesized initially as an inactive proenzyme. Formation of the active enzyme involves a self-maturation process in which the active site pyruvoyl group is generated from an internal serine residue via an autocatalytic post-translational modification. Two non-identical subunits are generated from the proenzyme in this reaction, and the pyruvate is formed at the N-terminus of the alpha chain, which is derived from the carboxyl end of the proenzyme. The autoendoproteolytic cleavage occurs by a canonical serine protease mechanism, in which the side chain hydroxyl group of the serine supplies its oxygen atom to form the C-terminus of the beta chain, while the remainder of the serine residue undergoes an oxidative deamination to produce ammonia and the pyruvoyl prosthetic group on the alpha chain. During this reaction, the Ser that is part of the protease active site of the proenzyme becomes the pyruvoyl prosthetic group, which constitutes an essential element of the active site of the mature decarboxylase.

The protein resides in the cell membrane. It catalyses the reaction a 1,2-diacyl-sn-glycero-3-phospho-L-serine + H(+) = a 1,2-diacyl-sn-glycero-3-phosphoethanolamine + CO2. Its pathway is phospholipid metabolism; phosphatidylethanolamine biosynthesis; phosphatidylethanolamine from CDP-diacylglycerol: step 2/2. In terms of biological role, catalyzes the formation of phosphatidylethanolamine (PtdEtn) from phosphatidylserine (PtdSer). In Albidiferax ferrireducens (strain ATCC BAA-621 / DSM 15236 / T118) (Rhodoferax ferrireducens), this protein is Phosphatidylserine decarboxylase proenzyme.